Consider the following 173-residue polypeptide: uncharacterized protein (173 aa).

Positions V4–V173 constitute an N-acetyltransferase domain. Residues I97–L99, R106–K110, and N136–N138 each bind acetyl-CoA.

This is an uncharacterized protein from Lactobacillus delbrueckii subsp. lactis.